Here is a 129-residue protein sequence, read N- to C-terminus: Type II secretion system protein I (129 aa).

A propeptide spans 1-6 (MKRARG) (leader sequence). Phe7 bears the N-methylphenylalanine mark. Residues 7–27 (FTLLEVLVALAIFAMVAASVL) traverse the membrane as a helical segment.

It belongs to the GSP I family. As to quaternary structure, type II secretion is composed of four main components: the outer membrane complex, the inner membrane complex, the cytoplasmic secretion ATPase and the periplasm-spanning pseudopilus. Forms the tip of the type II pseudopilus by interacting with XcpU, XcpW and XcpX. Interacts with core component XcpT. Post-translationally, cleaved by prepilin peptidase. In terms of processing, methylated by prepilin peptidase at the amino group of the N-terminal phenylalanine once the leader sequence is cleaved by prepilin peptidase.

The protein resides in the cell inner membrane. Component of the type II secretion system required for the energy-dependent secretion of extracellular factors such as proteases and toxins from the periplasm. Part of the pseudopilus tip complex that is critical for the recognition and binding of secretion substrates. Type II pseudopilus confers increased bacterial adhesive capabilities. This chain is Type II secretion system protein I (xcpV), found in Pseudomonas aeruginosa (strain ATCC 15692 / DSM 22644 / CIP 104116 / JCM 14847 / LMG 12228 / 1C / PRS 101 / PAO1).